A 602-amino-acid chain; its full sequence is Protein NRT1/ PTR FAMILY 5.7 (602 aa).

Transmembrane regions (helical) follow at residues 56-73 and 87-107; these read LSYF…TTIL and WSGV…AYLG. A Phosphothreonine modification is found at Thr111. Helical transmembrane passes span 112-132, 152-172, 197-217, 220-240, 337-357, 381-401, 422-442, 465-485, 500-520, and 548-568; these read VLLA…SWFI, IAFF…KPSL, WWNA…VYIE, IGWG…FFIF, VKLL…GVCA, IVPP…TVTI, ILQR…IAAL, IWLA…LVGL, LGIA…NLLI, and FYWM…IVAM.

Belongs to the major facilitator superfamily. Proton-dependent oligopeptide transporter (POT/PTR) (TC 2.A.17) family. As to expression, expressed in shoots, stems, leaves and flowers.

Its subcellular location is the membrane. The polypeptide is Protein NRT1/ PTR FAMILY 5.7 (NPF5.7) (Arabidopsis thaliana (Mouse-ear cress)).